Here is a 200-residue protein sequence, read N- to C-terminus: 6,7-dimethyl-8-ribityllumazine synthase (200 aa).

Residues tryptophan 25, 59 to 61, and 119 to 121 each bind 5-amino-6-(D-ribitylamino)uracil; these read SWE and VLI. 124 to 125 serves as a coordination point for (2S)-2-hydroxy-3-oxobutyl phosphate; that stretch reads ET. Histidine 127 serves as the catalytic Proton donor. Phenylalanine 152 is a binding site for 5-amino-6-(D-ribitylamino)uracil. Arginine 166 contacts (2S)-2-hydroxy-3-oxobutyl phosphate.

Belongs to the DMRL synthase family. As to quaternary structure, homopentamer.

It carries out the reaction (2S)-2-hydroxy-3-oxobutyl phosphate + 5-amino-6-(D-ribitylamino)uracil = 6,7-dimethyl-8-(1-D-ribityl)lumazine + phosphate + 2 H2O + H(+). Its pathway is cofactor biosynthesis; riboflavin biosynthesis; riboflavin from 2-hydroxy-3-oxobutyl phosphate and 5-amino-6-(D-ribitylamino)uracil: step 1/2. Functionally, catalyzes the formation of 6,7-dimethyl-8-ribityllumazine by condensation of 5-amino-6-(D-ribitylamino)uracil with 3,4-dihydroxy-2-butanone 4-phosphate. This is the penultimate step in the biosynthesis of riboflavin. The protein is 6,7-dimethyl-8-ribityllumazine synthase of Pyricularia oryzae (strain 70-15 / ATCC MYA-4617 / FGSC 8958) (Rice blast fungus).